Reading from the N-terminus, the 211-residue chain is Dibenzothiophene metabolism operon protein DoxH (211 aa).

It functions in the pathway aromatic compound metabolism; naphthalene degradation. May be involved in the conversion of 2-hydroxy-4-(2'-oxo-3,5-cyclohexadienyl)-buta-2,4-dienoate to cis-O-hydroxybenzylidenepyruvate. DoxH and doxJ encode different enzymes that may have interchangeable functions. In Pseudomonas sp. (strain C18), this protein is Dibenzothiophene metabolism operon protein DoxH (doxH).